The sequence spans 94 residues: Serine protease inhibitor Kazal-type 13 (94 aa).

Positions 1-23 (MAAFPHKIIFFLVCSTLTHVAFS) are cleaved as a signal peptide. A Kazal-like domain is found at 33-94 (RWPKPRCKMY…IKFEKYGKCD (62 aa)). Disulfide bonds link Cys-39/Cys-75, Cys-53/Cys-72, and Cys-61/Cys-93. An N-linked (GlcNAc...) asparagine glycan is attached at Asn-55.

The protein localises to the secreted. May be a serine protease inhibitor. Essential for sperm maturation and fertility. Inhibits sperm acrosome reaction, protecting sperm from premature reaction. This Homo sapiens (Human) protein is Serine protease inhibitor Kazal-type 13 (SPINK13).